A 338-amino-acid chain; its full sequence is Ketol-acid reductoisomerase (NADP(+)) (338 aa).

Residues 1–181 enclose the KARI N-terminal Rossmann domain; the sequence is MQIFYDKDCD…GGGRTGIIET (181 aa). NADP(+) contacts are provided by residues 24 to 27, arginine 47, serine 50, serine 52, and 82 to 85; these read YGSQ and DEFQ. Histidine 107 is a catalytic residue. Residue glycine 133 coordinates NADP(+). The KARI C-terminal knotted domain occupies 182 to 327; that stretch reads SFREETETDL…AKLRAMMPWI (146 aa). Residues aspartate 190, glutamate 194, glutamate 226, and glutamate 230 each contribute to the Mg(2+) site. Serine 251 provides a ligand contact to substrate.

It belongs to the ketol-acid reductoisomerase family. Mg(2+) is required as a cofactor.

It carries out the reaction (2R)-2,3-dihydroxy-3-methylbutanoate + NADP(+) = (2S)-2-acetolactate + NADPH + H(+). The enzyme catalyses (2R,3R)-2,3-dihydroxy-3-methylpentanoate + NADP(+) = (S)-2-ethyl-2-hydroxy-3-oxobutanoate + NADPH + H(+). The protein operates within amino-acid biosynthesis; L-isoleucine biosynthesis; L-isoleucine from 2-oxobutanoate: step 2/4. It functions in the pathway amino-acid biosynthesis; L-valine biosynthesis; L-valine from pyruvate: step 2/4. Functionally, involved in the biosynthesis of branched-chain amino acids (BCAA). Catalyzes an alkyl-migration followed by a ketol-acid reduction of (S)-2-acetolactate (S2AL) to yield (R)-2,3-dihydroxy-isovalerate. In the isomerase reaction, S2AL is rearranged via a Mg-dependent methyl migration to produce 3-hydroxy-3-methyl-2-ketobutyrate (HMKB). In the reductase reaction, this 2-ketoacid undergoes a metal-dependent reduction by NADPH to yield (R)-2,3-dihydroxy-isovalerate. This Acinetobacter baumannii (strain AB0057) protein is Ketol-acid reductoisomerase (NADP(+)).